A 113-amino-acid chain; its full sequence is Nucleoid-associated protein CLJ_B0037 (113 aa).

Basic and acidic residues predominate over residues 93–102 (EEDTSSEVKR). A disordered region spans residues 93 to 113 (EEDTSSEVKRLTGGMNLPGMF).

It belongs to the YbaB/EbfC family. As to quaternary structure, homodimer.

Its subcellular location is the cytoplasm. The protein localises to the nucleoid. Functionally, binds to DNA and alters its conformation. May be involved in regulation of gene expression, nucleoid organization and DNA protection. The chain is Nucleoid-associated protein CLJ_B0037 from Clostridium botulinum (strain 657 / Type Ba4).